Here is a 356-residue protein sequence, read N- to C-terminus: N-acyl-phosphatidylethanolamine-hydrolyzing phospholipase D 1 (356 aa).

Positions 144 and 146 each coordinate Zn(2+). Tyr-147 is a binding site for an N-acyl-1,2-diacyl-sn-glycero-3-phosphoethanolamine. Asp-148, His-149, His-217, and Asp-248 together coordinate Zn(2+). Position 286 (His-286) interacts with an N-acyl-1,2-diacyl-sn-glycero-3-phosphoethanolamine. His-308 provides a ligand contact to Zn(2+).

This sequence belongs to the NAPE-PLD family. Zn(2+) is required as a cofactor. Expressed in interneurons that are in close proximity to the primary sensory neurons. Predominantly expressed in the pharynx but can also be found in cell bodies of the dorsal and ventral nerve cords.

It carries out the reaction an N-acyl-1,2-diacyl-sn-glycero-3-phosphoethanolamine + H2O = an N-acylethanolamine + a 1,2-diacyl-sn-glycero-3-phosphate + H(+). The catalysed reaction is 1,2-dihexadecanoyl-sn-glycero-3-phospho-(N-hexadecanoyl)-ethanolamine + H2O = 1,2-dihexadecanoyl-sn-glycero-3-phosphate + N-hexadecanoylethanolamine + H(+). It catalyses the reaction N-(5Z,8Z,11Z,14Z-eicosatetraenoyl)-1,2-di-(9Z-octadecenoyl)-sn-glycero-3-phosphoethanolamine + H2O = N-(5Z,8Z,11Z,14Z-eicosatetraenoyl)-ethanolamine + 1,2-di-(9Z-octadecenoyl)-sn-glycero-3-phosphate + H(+). D-type phospholipase that hydrolyzes N-acyl-phosphatidylethanolamines (NAPEs) to produce bioactive N-acylethanolamines/fatty acid ethanolamides (NAEs/FAEs) and phosphatidic acid. NAEs are bioactive lipids that are involved in diverse physiological processes such as growth and lifespan. The chain is N-acyl-phosphatidylethanolamine-hydrolyzing phospholipase D 1 from Caenorhabditis elegans.